The sequence spans 482 residues: tRNA sulfurtransferase (482 aa).

The 105-residue stretch at 61-165 (AQYLETLACI…NDELYIISAV (105 aa)) folds into the THUMP domain. Residues 183–184 (LL), lysine 265, glycine 287, and glutamine 296 contribute to the ATP site. An intrachain disulfide couples cysteine 344 to cysteine 456. Positions 404–482 (LAADEVILDI…GFDNVKVYRP (79 aa)) constitute a Rhodanese domain. The active-site Cysteine persulfide intermediate is the cysteine 456.

This sequence belongs to the ThiI family.

The protein resides in the cytoplasm. The catalysed reaction is [ThiI sulfur-carrier protein]-S-sulfanyl-L-cysteine + a uridine in tRNA + 2 reduced [2Fe-2S]-[ferredoxin] + ATP + H(+) = [ThiI sulfur-carrier protein]-L-cysteine + a 4-thiouridine in tRNA + 2 oxidized [2Fe-2S]-[ferredoxin] + AMP + diphosphate. The enzyme catalyses [ThiS sulfur-carrier protein]-C-terminal Gly-Gly-AMP + S-sulfanyl-L-cysteinyl-[cysteine desulfurase] + AH2 = [ThiS sulfur-carrier protein]-C-terminal-Gly-aminoethanethioate + L-cysteinyl-[cysteine desulfurase] + A + AMP + 2 H(+). It participates in cofactor biosynthesis; thiamine diphosphate biosynthesis. Functionally, catalyzes the ATP-dependent transfer of a sulfur to tRNA to produce 4-thiouridine in position 8 of tRNAs, which functions as a near-UV photosensor. Also catalyzes the transfer of sulfur to the sulfur carrier protein ThiS, forming ThiS-thiocarboxylate. This is a step in the synthesis of thiazole, in the thiamine biosynthesis pathway. The sulfur is donated as persulfide by IscS. The sequence is that of tRNA sulfurtransferase from Aeromonas salmonicida (strain A449).